The chain runs to 209 residues: Imidazole glycerol phosphate synthase subunit HisH (209 aa).

The Glutamine amidotransferase type-1 domain occupies 1-205 (MIAIIDYGMG…KGVVETWKSS (205 aa)). C79 (nucleophile) is an active-site residue. Catalysis depends on residues H180 and E182.

In terms of assembly, heterodimer of HisH and HisF.

It localises to the cytoplasm. It carries out the reaction 5-[(5-phospho-1-deoxy-D-ribulos-1-ylimino)methylamino]-1-(5-phospho-beta-D-ribosyl)imidazole-4-carboxamide + L-glutamine = D-erythro-1-(imidazol-4-yl)glycerol 3-phosphate + 5-amino-1-(5-phospho-beta-D-ribosyl)imidazole-4-carboxamide + L-glutamate + H(+). The catalysed reaction is L-glutamine + H2O = L-glutamate + NH4(+). Its pathway is amino-acid biosynthesis; L-histidine biosynthesis; L-histidine from 5-phospho-alpha-D-ribose 1-diphosphate: step 5/9. Functionally, IGPS catalyzes the conversion of PRFAR and glutamine to IGP, AICAR and glutamate. The HisH subunit catalyzes the hydrolysis of glutamine to glutamate and ammonia as part of the synthesis of IGP and AICAR. The resulting ammonia molecule is channeled to the active site of HisF. The sequence is that of Imidazole glycerol phosphate synthase subunit HisH from Bacillus anthracis (strain CDC 684 / NRRL 3495).